A 306-amino-acid chain; its full sequence is Non-specific ribonucleoside hydrolase RihC (306 aa).

The active site involves His235.

The protein belongs to the IUNH family. RihC subfamily.

Its function is as follows. Hydrolyzes both purine and pyrimidine ribonucleosides with a broad-substrate specificity. The sequence is that of Non-specific ribonucleoside hydrolase RihC from Salmonella paratyphi B (strain ATCC BAA-1250 / SPB7).